The primary structure comprises 410 residues: Histone-lysine N-methyltransferase SUV39H2 (410 aa).

One can recognise a Chromo domain in the interval 47–105 (YEVEYLCDYKVVKDMEYYLVKWKGWPDSTNTWEPLQNLKCPLLLQQFSNDKHNYLSQVK). Residues 189–247 (FGCSCTDCFFQKCCPAEAGVLLAYNKNQQIKIPPGTPIYECNSRCQCGPDCPNRIVQKG) form the Pre-SET domain. Positions 191, 193, 196, 201, 202, 229, 233, 235, and 239 each coordinate Zn(2+). The 124-residue stretch at 250–373 (YSLCIFRTSN…AGEELTFDYQ (124 aa)) folds into the SET domain. S-adenosyl-L-methionine is bound by residues 261–263 (RGW) and 330–331 (NH). Position 333 (C333) interacts with Zn(2+). Y372 is a binding site for S-adenosyl-L-methionine. 3 positions are modified to phosphoserine: S381, S384, and S388. In terms of domain architecture, Post-SET spans 394 to 410 (VRTVCKCGAVTCRGYLN). C398 lines the Zn(2+) pocket. K399 is an S-adenosyl-L-methionine binding site. Residues C400 and C405 each coordinate Zn(2+).

Belongs to the class V-like SAM-binding methyltransferase superfamily. Histone-lysine methyltransferase family. Suvar3-9 subfamily. In terms of assembly, interacts with SMAD5. The large PER complex involved in the histone methylation is composed of at least PER2, CBX3, TRIM28, SUV39H1 and/or SUV39H2; CBX3 mediates the formation of the complex. Ubiquitinated by the DCX(DCAF13) E3 ubiquitin ligase complex, leading to its degradation.

The protein localises to the nucleus. Its subcellular location is the chromosome. It localises to the centromere. It catalyses the reaction L-lysyl(9)-[histone H3] + 3 S-adenosyl-L-methionine = N(6),N(6),N(6)-trimethyl-L-lysyl(9)-[histone H3] + 3 S-adenosyl-L-homocysteine + 3 H(+). Its function is as follows. Histone methyltransferase that specifically trimethylates 'Lys-9' of histone H3 using monomethylated H3 'Lys-9' as substrate. H3 'Lys-9' trimethylation represents a specific tag for epigenetic transcriptional repression by recruiting HP1 (CBX1, CBX3 and/or CBX5) proteins to methylated histones. Mainly functions in heterochromatin regions, thereby playing a central role in the establishment of constitutive heterochromatin at pericentric and telomere regions. H3 'Lys-9' trimethylation is also required to direct DNA methylation at pericentric repeats. SUV39H1 is targeted to histone H3 via its interaction with RB1 and is involved in many processes, such as cell cycle regulation, transcriptional repression and regulation of telomere length. May participate in regulation of higher-order chromatin organization during spermatogenesis. Recruited by the large PER complex to the E-box elements of the circadian target genes such as PER2 itself or PER1, contributes to the conversion of local chromatin to a heterochromatin-like repressive state through H3 'Lys-9' trimethylation. This chain is Histone-lysine N-methyltransferase SUV39H2 (SUV39H2), found in Homo sapiens (Human).